We begin with the raw amino-acid sequence, 1080 residues long: MLHKRASEANDKNDNTIIGSDLASSKKRRIDFTESSSDKSSSILASGSSRGFHGDSVVQQIDMAFGNSNRQEIDEDLHSRQLAVYGRETMRRLFASNVLISGMHGLGAEIAKNLILAGVKSVTLHDERVVELWDLSSNFVFSEDDVGKNRADASVQKLQDLNNAVVVSSLTKSLNKEDLSGFQVVVFSDISMERAIEFDDYCHSHQPPIAFVKADVRGLFGSVFCDFGPEFAVLDVDGEEPHTGIIASISNENQAFISCVDDERLEFEDGDLVVFSEVEGMTELNDGKPRKIKSTRPYSFTLDEDTTNYGTYVKGGIVTQVKQPKLLNFKPLREALKDPGDFLFSDFSKFDRPPLLHLAFQALDHFKAEAGRFPVAGSEEDAQKLISIATAINTGQGDLKVENVDQKLLRHFSFGAKAVLNPMAAMFGGIVGQEVVKACSGKFHPLFQFFYFDSVESLPSEPVDSSDFAPRNSRYDAQISVFGAKFQKKLEDAKVFTVGSGALGCEFLKNLALMGVSCGSQGKLTVTDDDIIEKSNLSRQFLFRDWNIGQAKSTVAASAAAVINPRFNIEALQNRVGAETENVFDDAFWENLTVVVNALDNVNARLYVDSRCLYFQKPLLESGTLGTKCNTQSVIPHLTENYGASRDPPEKQAPMCTVHSFPHNIDHCLTWARSEFEGLLEKTPAEVNAYLSSPVEYTNSMMSAGDAQARDTLERIVECLEKEKCETFQDCLTWARLRFEDYFVNRVKQLIYTFPEDAATSTGAPFWSAPKRFPRPLQYSSSDPSLLNFITATAILRAETFGIPIPEWTKNPKEAAEAVDRVIVPDFEPRQDAKIVTDEKATTLTTASVDDAAVIDDLIAKIDQCRHNLSPDFRMKPIQFEKDDDTNYHMDVIAGLANMRARNYSIPEVDKLKAKFIAGRIIPAIATSTAMATGLVCLELYKVLDGGHKVEAYRNTFANLALPLFSMAEPLPPKVVKHRDMAWTVWDRWVLKGNPTLREVLQWLEDKGLSAYSISCGSCLLFNSMFTRHKERMDKKVVDLARDVAKVELPPYRNHLDVVVACEDEDDNDVDIPLVSIYFR.

Basic and acidic residues predominate over residues 1–14 (MLHKRASEANDKND). Disordered stretches follow at residues 1 to 20 (MLHK…IIGS) and 29 to 50 (RIDF…GSSR). The segment covering 38–49 (DKSSSILASGSS) has biased composition (low complexity). ATP contacts are provided by residues A502, D528, R539, K552, and 600–601 (DN). C656 functions as the Glycyl thioester intermediate in the catalytic mechanism.

It belongs to the ubiquitin-activating E1 family. Monomer. As to expression, expressed in leaves, flowers, roots and stems. Detected in germinating seeds, cotyledons, hypocotyls, vascular tissues, anthers, filaments, pollen, style, stigma, sepals, petals, ovary, developing ovules, funiculi and silique walls.

The catalysed reaction is ATP + ubiquitin + [E1 ubiquitin-activating enzyme]-L-cysteine = AMP + diphosphate + S-ubiquitinyl-[E1 ubiquitin-activating enzyme]-L-cysteine.. The protein operates within protein modification; protein ubiquitination. Functionally, activates ubiquitin by first adenylating its C-terminal glycine residue with ATP, and thereafter linking this residue to the side chain of a cysteine residue in E1, yielding a ubiquitin-E1 thioester and free AMP. This is Ubiquitin-activating enzyme E1 1 (UBA1) from Arabidopsis thaliana (Mouse-ear cress).